The primary structure comprises 278 residues: Inositol oxygenase (278 aa).

Substrate-binding positions include R22 and D78–S80. 3 residues coordinate Fe cation: H91, H116, and D117. Residues K120 and G134 to D135 contribute to the substrate site. Residues H187, H213, and D246 each coordinate Fe cation. Substrate is bound at residue H213–S214.

This sequence belongs to the myo-inositol oxygenase family. The cofactor is Fe cation.

The protein localises to the cytoplasm. It catalyses the reaction myo-inositol + O2 = D-glucuronate + H2O + H(+). Its pathway is polyol metabolism; myo-inositol degradation into D-glucuronate; D-glucuronate from myo-inositol: step 1/1. The chain is Inositol oxygenase (miox) from Danio rerio (Zebrafish).